Here is a 114-residue protein sequence, read N- to C-terminus: Large ribosomal subunit protein uL18 (114 aa).

It belongs to the universal ribosomal protein uL18 family. In terms of assembly, part of the 50S ribosomal subunit; part of the 5S rRNA/L5/L18/L25 subcomplex. Contacts the 23S rRNA. Contacts protein L27 and the 5S rRNA.

This is one of the proteins that bind and probably mediate the attachment of the 5S RNA into the large ribosomal subunit, where it forms part of the central protuberance. The protein is Large ribosomal subunit protein uL18 (rplR) of Deinococcus radiodurans (strain ATCC 13939 / DSM 20539 / JCM 16871 / CCUG 27074 / LMG 4051 / NBRC 15346 / NCIMB 9279 / VKM B-1422 / R1).